A 508-amino-acid chain; its full sequence is Mitochondrial distribution and morphology protein 10 (508 aa).

The disordered stretch occupies residues 160 to 195; the sequence is PAHPTSTRPTPPQTPPSHTRQPSEPSTPAPSPTPGN.

The protein belongs to the MDM10 family. In terms of assembly, component of the ER-mitochondria encounter structure (ERMES) or MDM complex, composed of MMM1, MDM10, MDM12 and MDM34. Associates with the mitochondrial outer membrane sorting assembly machinery SAM(core) complex.

The protein localises to the mitochondrion outer membrane. In terms of biological role, component of the ERMES/MDM complex, which serves as a molecular tether to connect the endoplasmic reticulum and mitochondria. Components of this complex are involved in the control of mitochondrial shape and protein biogenesis and may function in phospholipid exchange. MDM10 is involved in the late assembly steps of the general translocase of the mitochondrial outer membrane (TOM complex). Functions in the TOM40-specific route of the assembly of outer membrane beta-barrel proteins, including the association of TOM40 with the receptor TOM22 and small TOM proteins. Can associate with the SAM(core) complex as well as the MDM12-MMM1 complex, both involved in late steps of the major beta-barrel assembly pathway, that is responsible for biogenesis of all outer membrane beta-barrel proteins. May act as a switch that shuttles between both complexes and channels precursor proteins into the TOM40-specific pathway. Plays a role in mitochondrial morphology and in the inheritance of mitochondria. The polypeptide is Mitochondrial distribution and morphology protein 10 (Cryptococcus neoformans var. neoformans serotype D (strain JEC21 / ATCC MYA-565) (Filobasidiella neoformans)).